The chain runs to 406 residues: Anthranilate 1,2-dioxygenase system ferredoxin--NAD(+) reductase component (406 aa).

5-37 is an FAD binding site; the sequence is PFVIVGAGHAARRTAEALRARDADAPIVMIGAE. 152–161 lines the NAD(+) pocket; that stretch reads GGGFIGLEVA.

It belongs to the FAD-dependent oxidoreductase family. Part of a multicomponent enzyme system composed of a reductase (AndAa), a ferredoxin (AndAb) and a two-subunit oxygenase component (AndAc and AndAd). FAD serves as cofactor.

The catalysed reaction is 2 reduced [2Fe-2S]-[ferredoxin] + NAD(+) + H(+) = 2 oxidized [2Fe-2S]-[ferredoxin] + NADH. It functions in the pathway aromatic compound metabolism; anthranilate degradation via hydroxylation; catechol from anthranilate: step 1/1. In terms of biological role, part of the multicomponent anthranilate dioxygenase, that converts anthranilate to catechol. Probably transfers electrons from ferredoxin (AndAb) to NADH. This is Anthranilate 1,2-dioxygenase system ferredoxin--NAD(+) reductase component from Burkholderia cepacia (Pseudomonas cepacia).